The primary structure comprises 515 residues: ADP,ATP carrier protein 1 (515 aa).

12 helical membrane passes run 24-44, 62-82, 93-113, 124-144, 149-169, 184-204, 226-246, 286-306, 329-349, 358-378, 383-403, and 465-485; these read LKKVLPMFLMFFCITFNYTVL, AIPFIKFWLVVPCAIIFMLIY, ALFYAVGTPFLIFFALFPTVI, EFADRLQAILPPGLLGLVAIL, FAAFYVLAELWGSVMLSLMFW, FYALFGIGANISLLASGRAIV, LLMAMTIVSGLVLMASYWWIN, YILLLALLVIAYGICINLIEV, FSFWTGVVSVLIMLFVGGNVI, ALVTPVMVLLTGIVFFALVIF, SGLVAMFGTTPLMLAVVVGAI, and IGAMTPYLAVILLFIIAIWLV.

This sequence belongs to the ADP/ATP translocase tlc family.

The protein resides in the cell membrane. The chain is ADP,ATP carrier protein 1 (tlcA) from Chlamydia pneumoniae (Chlamydophila pneumoniae).